The chain runs to 377 residues: Mechanosensory abnormality protein 6 (377 aa).

Over 1 to 13 (MGLQSAAAHFINR) the chain is Cytoplasmic. Residues 14–34 (FIIWITIFMVACFLLRLLVVL) traverse the membrane as a helical segment. At 35–377 (DLNKRVYNHT…HCDLTHSYIT (343 aa)) the chain is on the extracellular side. Cys48 and Cys369 are disulfide-bonded. Asn94 carries an N-linked (GlcNAc...) asparagine glycan.

It belongs to the paraoxonase family. Component of a non-voltage-gated amiloride-sensitive cation channel complex (also called the degenerin channel complex) composed of at least the mec-2, mec-4, mec-6 and mec-10 subunits; the complex mediates mechanotransduction in touch cells. Interacts with mec-2, mec-4 and mec-10. Post-translationally, glycosylated. In terms of tissue distribution, expressed in neurons including the six touch receptors, ventral cord motor neurons, HSN, PVD, PVC, IL1, and several neurons near the nerve ring, in the anal ganglion and in the male tail sensory rays, in muscles including the body wall, vulval, intestinal, anal depressor and sphincter muscles, and in the excretory canal.

It is found in the cell membrane. The protein localises to the cell projection. It localises to the axon. Its function is as follows. Subunit of an amiloride-sensitive cation channel (degenerin channel complex) permeable for sodium, potassium, lithium and N-methylglucamine, and required for mechanosensory transduction (touch sensitivity). Interacts with degenerin channel proteins and stabilizes the channel. Plays a role in mechanosensory transduction (touch sensitivity). In Caenorhabditis elegans, this protein is Mechanosensory abnormality protein 6.